The primary structure comprises 27 residues: rRNA/tRNA 2'-O-methyltransferase fibrillarin (27 aa).

Over residues 1-12 (XFEGRGGFGGRG) the composition is skewed to gly residues. Positions 1 to 27 (XFEGRGGFGGRGGGDRGGRGXGGFGGG) are disordered. Asymmetric dimethylarginine occurs at positions 5, 11, 16, and 19.

Belongs to the methyltransferase superfamily. Fibrillarin family. As to quaternary structure, component of box C/D small nucleolar ribonucleoprotein (snoRNP) particles. It is associated with the U3, U8 and U13 small nuclear RNAs.

The protein localises to the nucleus. Its subcellular location is the nucleolus. The catalysed reaction is L-glutaminyl-[histone H2A] + S-adenosyl-L-methionine = N(5)-methyl-L-glutaminyl-[histone H2A] + S-adenosyl-L-homocysteine + H(+). Its function is as follows. S-adenosyl-L-methionine-dependent methyltransferase that has the ability to methylate both RNAs and proteins. Involved in pre-rRNA processing. Utilizes the methyl donor S-adenosyl-L-methionine to catalyze the site-specific 2'-hydroxyl methylation of ribose moieties in pre-ribosomal RNA. Site specificity is provided by a guide RNA that base pairs with the substrate. Methylation occurs at a characteristic distance from the sequence involved in base pairing with the guide RNA. Also acts as a protein methyltransferase by mediating methylation of 'Gln-105' of histone H2A (H2AQ105me), a modification that impairs binding of the FACT complex and is specifically present at 35S ribosomal DNA locus. This is rRNA/tRNA 2'-O-methyltransferase fibrillarin from Physarum polycephalum (Slime mold).